A 212-amino-acid chain; its full sequence is Root-specific lectin (212 aa).

A signal peptide spans 1–26; it reads MKMMSTRALALGAAAVLAFAAATAHA. A Pyrrolidone carboxylic acid modification is found at glutamine 27. Chitin-binding type-1 domains are found at residues 27–68, 69–111, 112–154, and 155–197; these read QRCG…ACYT, SKRC…PCRA, DIKC…ACST, and DKPC…GCDG. Intrachain disulfides connect cysteine 29–cysteine 44, cysteine 38–cysteine 50, cysteine 43–cysteine 57, cysteine 61–cysteine 66, cysteine 72–cysteine 87, cysteine 81–cysteine 93, cysteine 86–cysteine 100, cysteine 104–cysteine 109, cysteine 115–cysteine 130, cysteine 124–cysteine 136, cysteine 129–cysteine 143, cysteine 147–cysteine 152, cysteine 158–cysteine 173, cysteine 167–cysteine 179, cysteine 172–cysteine 186, and cysteine 190–cysteine 195. 36-38 lines the substrate pocket; sequence MEC. 88 to 99 serves as a coordination point for substrate; that stretch reads SQWGYCGFGAEY. 140–141 provides a ligand contact to substrate; sequence SE. Asparagine 206 carries an N-linked (GlcNAc...) asparagine glycan.

In terms of tissue distribution, in roots.

Its function is as follows. Carbohydrate binding. The protein is Root-specific lectin of Hordeum vulgare (Barley).